Consider the following 367-residue polypeptide: Phospho-N-acetylmuramoyl-pentapeptide-transferase (367 aa).

A run of 10 helical transmembrane segments spans residues 27 to 47 (VLAA…VIRW), 73 to 93 (TMGG…WGDL), 97 to 117 (YVWT…YDDW), 132 to 152 (WKFF…AFSA), 167 to 187 (TMAY…VIVG), 200 to 220 (GLAI…AYVT), 237 to 257 (AGEL…FLWF), 264 to 284 (VFMG…VAVI), 289 to 309 (IVLL…MLQV), and 344 to 364 (QVVV…LSTL).

The protein belongs to the glycosyltransferase 4 family. MraY subfamily. Mg(2+) is required as a cofactor.

It localises to the cell inner membrane. The enzyme catalyses UDP-N-acetyl-alpha-D-muramoyl-L-alanyl-gamma-D-glutamyl-meso-2,6-diaminopimeloyl-D-alanyl-D-alanine + di-trans,octa-cis-undecaprenyl phosphate = di-trans,octa-cis-undecaprenyl diphospho-N-acetyl-alpha-D-muramoyl-L-alanyl-D-glutamyl-meso-2,6-diaminopimeloyl-D-alanyl-D-alanine + UMP. It participates in cell wall biogenesis; peptidoglycan biosynthesis. Catalyzes the initial step of the lipid cycle reactions in the biosynthesis of the cell wall peptidoglycan: transfers peptidoglycan precursor phospho-MurNAc-pentapeptide from UDP-MurNAc-pentapeptide onto the lipid carrier undecaprenyl phosphate, yielding undecaprenyl-pyrophosphoryl-MurNAc-pentapeptide, known as lipid I. In Dechloromonas aromatica (strain RCB), this protein is Phospho-N-acetylmuramoyl-pentapeptide-transferase.